We begin with the raw amino-acid sequence, 288 residues long: Protoheme IX farnesyltransferase (288 aa).

Transmembrane regions (helical) follow at residues 6–26 (VILY…LLSL), 44–64 (FLDS…NNVI), 89–109 (LAIL…VKFI), 111–131 (VVCF…YSFF), 138–158 (ISTI…YCSV), 169–189 (LLIM…ILHF), 213–233 (IILH…INSI), 238–258 (LIIS…ELTI), and 268–288 (IFRW…FGFV).

Belongs to the UbiA prenyltransferase family. Protoheme IX farnesyltransferase subfamily.

Its subcellular location is the cell membrane. It carries out the reaction heme b + (2E,6E)-farnesyl diphosphate + H2O = Fe(II)-heme o + diphosphate. Its pathway is porphyrin-containing compound metabolism; heme O biosynthesis; heme O from protoheme: step 1/1. Converts heme B (protoheme IX) to heme O by substitution of the vinyl group on carbon 2 of heme B porphyrin ring with a hydroxyethyl farnesyl side group. This Buchnera aphidicola subsp. Baizongia pistaciae (strain Bp) protein is Protoheme IX farnesyltransferase.